The primary structure comprises 136 residues: Small nuclear ribonucleoprotein Sm D3 (136 aa).

The Sm domain maps to 6–78 (VPIKILHEAE…IRFMILPDML (73 aa)). Residues 98-136 (GLGGLDQRGRGRGTAFRRPMGRGGPRGMSRPGGAPTFRG) form a disordered region.

The protein belongs to the snRNP core protein family.

It is found in the nucleus. It localises to the cytoplasm. The protein localises to the cytosol. Its function is as follows. Plays a role in pre-mRNA splicing as a core component of the spliceosomal U1, U2, U4 and U5 small nuclear ribonucleoproteins (snRNPs), the building blocks of the spliceosome. The sequence is that of Small nuclear ribonucleoprotein Sm D3 (snr-1) from Caenorhabditis elegans.